A 338-amino-acid polypeptide reads, in one-letter code: Ketol-acid reductoisomerase (NADP(+)) (338 aa).

One can recognise a KARI N-terminal Rossmann domain in the interval 1-181 (MKVFYDKDAD…GGGRAGIIET (181 aa)). Residues 24–27 (YGSQ), Arg47, and Ser52 each bind NADP(+). His107 is an active-site residue. Residue Gly133 participates in NADP(+) binding. The region spanning 182–327 (NFREETETDL…AKLRAMMPWI (146 aa)) is the KARI C-terminal knotted domain. 4 residues coordinate Mg(2+): Asp190, Glu194, Glu226, and Glu230. Ser251 is a substrate binding site.

Belongs to the ketol-acid reductoisomerase family. Mg(2+) serves as cofactor.

It catalyses the reaction (2R)-2,3-dihydroxy-3-methylbutanoate + NADP(+) = (2S)-2-acetolactate + NADPH + H(+). The enzyme catalyses (2R,3R)-2,3-dihydroxy-3-methylpentanoate + NADP(+) = (S)-2-ethyl-2-hydroxy-3-oxobutanoate + NADPH + H(+). It functions in the pathway amino-acid biosynthesis; L-isoleucine biosynthesis; L-isoleucine from 2-oxobutanoate: step 2/4. The protein operates within amino-acid biosynthesis; L-valine biosynthesis; L-valine from pyruvate: step 2/4. In terms of biological role, involved in the biosynthesis of branched-chain amino acids (BCAA). Catalyzes an alkyl-migration followed by a ketol-acid reduction of (S)-2-acetolactate (S2AL) to yield (R)-2,3-dihydroxy-isovalerate. In the isomerase reaction, S2AL is rearranged via a Mg-dependent methyl migration to produce 3-hydroxy-3-methyl-2-ketobutyrate (HMKB). In the reductase reaction, this 2-ketoacid undergoes a metal-dependent reduction by NADPH to yield (R)-2,3-dihydroxy-isovalerate. This chain is Ketol-acid reductoisomerase (NADP(+)), found in Polynucleobacter necessarius subsp. necessarius (strain STIR1).